The chain runs to 420 residues: Tyrosine--tRNA ligase (420 aa).

An L-tyrosine-binding site is contributed by Y33. Positions 38 to 47 (PTADSLHIGH) match the 'HIGH' region motif. Residues Y168 and Q172 each contribute to the L-tyrosine site. Positions 231-235 (KFGKT) match the 'KMSKS' region motif. An ATP-binding site is contributed by K234. The 67-residue stretch at 353 to 419 (MLLVDALIKV…GKKNYYLVKL (67 aa)) folds into the S4 RNA-binding domain.

It belongs to the class-I aminoacyl-tRNA synthetase family. TyrS type 1 subfamily. Homodimer.

It is found in the cytoplasm. The enzyme catalyses tRNA(Tyr) + L-tyrosine + ATP = L-tyrosyl-tRNA(Tyr) + AMP + diphosphate + H(+). Functionally, catalyzes the attachment of tyrosine to tRNA(Tyr) in a two-step reaction: tyrosine is first activated by ATP to form Tyr-AMP and then transferred to the acceptor end of tRNA(Tyr). This is Tyrosine--tRNA ligase from Desulfitobacterium hafniense (strain Y51).